The following is a 513-amino-acid chain: 2-isopropylmalate synthase (513 aa).

The Pyruvate carboxyltransferase domain maps to 5–268; the sequence is LIIFDTTLRD…DVGVDTSQIV (264 aa). Residues D14, H202, H204, and N239 each coordinate Mn(2+). Positions 394-513 are regulatory domain; sequence RFISLSQRSE…KAVQKINPQI (120 aa).

It belongs to the alpha-IPM synthase/homocitrate synthase family. LeuA type 1 subfamily. In terms of assembly, homodimer. It depends on Mn(2+) as a cofactor.

It localises to the cytoplasm. It catalyses the reaction 3-methyl-2-oxobutanoate + acetyl-CoA + H2O = (2S)-2-isopropylmalate + CoA + H(+). It participates in amino-acid biosynthesis; L-leucine biosynthesis; L-leucine from 3-methyl-2-oxobutanoate: step 1/4. In terms of biological role, catalyzes the condensation of the acetyl group of acetyl-CoA with 3-methyl-2-oxobutanoate (2-ketoisovalerate) to form 3-carboxy-3-hydroxy-4-methylpentanoate (2-isopropylmalate). This is 2-isopropylmalate synthase from Cupriavidus pinatubonensis (strain JMP 134 / LMG 1197) (Cupriavidus necator (strain JMP 134)).